A 226-amino-acid chain; its full sequence is Cytidylate kinase (226 aa).

10–18 is an ATP binding site; sequence GPASSGKST.

The protein belongs to the cytidylate kinase family. Type 1 subfamily.

The protein localises to the cytoplasm. It carries out the reaction CMP + ATP = CDP + ADP. The catalysed reaction is dCMP + ATP = dCDP + ADP. The polypeptide is Cytidylate kinase (Enterococcus faecalis (strain ATCC 700802 / V583)).